A 346-amino-acid chain; its full sequence is MRLSDFRYTLPKTAVAEYPSEPRDSCKLMVLDRRKKTTDHKQFSDLLDYFKKGDVLVLNDTKVFPARLYGNKEKTSAKIEVFLLRELNKQAGLWDVLVEPARKVRVGNKIYFPNDLVAEVVDNTTSRGRTIRFLNPDIDIFSIVEKVGQMPIPPYIKRDPEEEDKERYQTVFARIPGAVVAPLAGLHFTNPLLKAIQDKGVEIISLTLHPGLSTFREVEVEDISKHKMDSEYYNVPYSCAKVINSIKEKKSGRVFAVGTTVCRALEANATVEGRIKFGEGWTDKYIYPPYDFKVVDALITNFHQPESTLLMLVSAFAEHDFLMKNYKLALKSDYKFLGYGDAMLIF.

This sequence belongs to the QueA family. Monomer.

It localises to the cytoplasm. The catalysed reaction is 7-aminomethyl-7-carbaguanosine(34) in tRNA + S-adenosyl-L-methionine = epoxyqueuosine(34) in tRNA + adenine + L-methionine + 2 H(+). Its pathway is tRNA modification; tRNA-queuosine biosynthesis. Its function is as follows. Transfers and isomerizes the ribose moiety from AdoMet to the 7-aminomethyl group of 7-deazaguanine (preQ1-tRNA) to give epoxyqueuosine (oQ-tRNA). The sequence is that of S-adenosylmethionine:tRNA ribosyltransferase-isomerase from Chloroherpeton thalassium (strain ATCC 35110 / GB-78).